Here is a 458-residue protein sequence, read N- to C-terminus: 5-hydroxytryptamine receptor 2C (458 aa).

The signal sequence occupies residues Met-1–Ala-32. At Leu-33 to Trp-55 the chain is on the extracellular side. The chain crosses the membrane as a helical span at residues Pro-56–Leu-80. Over Glu-81–Asn-86 the chain is Cytoplasmic. The chain crosses the membrane as a helical span at residues Ala-87–Leu-111. Residues Leu-112–Pro-128 are Extracellular-facing. A disulfide bridge links Cys-127 with Cys-207. The chain crosses the membrane as a helical span at residues Val-129–Asp-151. Residue Thr-139 coordinates ergotamine. Positions Asp-151–Tyr-153 match the DRY motif; important for ligand-induced conformation changes motif. Residues Arg-152–Ser-167 lie on the Cytoplasmic side of the membrane. The helical transmembrane segment at Arg-168–Ile-189 threads the bilayer. The Extracellular portion of the chain corresponds to Pro-190 to Asn-213. Asn-203 and Asn-204 each carry an N-linked (GlcNAc...) asparagine glycan. Leu-209 serves as a coordination point for ergotamine. Residues Phe-214–Leu-236 form a helical membrane-spanning segment. Residues Thr-237–Lys-311 are Cytoplasmic-facing. The disordered stretch occupies residues Thr-272–Gln-301. Over residues Arg-287–Arg-297 the composition is skewed to basic residues. Residues Val-312 to Leu-336 form a helical membrane-spanning segment. Cys-337 and Cys-341 are oxidised to a cystine. The Extracellular segment spans residues Cys-337–Glu-347. Residues Lys-348 to Leu-370 form a helical membrane-spanning segment. An NPxxY motif; important for ligand-induced conformation changes and signaling motif is present at residues Asn-364–Tyr-368. Over Phe-371 to Val-458 the chain is Cytoplasmic. The PDZ-binding signature appears at Ser-456–Val-458.

It belongs to the G-protein coupled receptor 1 family. As to quaternary structure, interacts with MPDZ. Interacts with ARRB2. Interacts with MPP3; this interaction stabilizes the receptor at the plasma membrane and prevents the desensitization of the HTR2C receptor-mediated calcium response.

The protein resides in the cell membrane. Its function is as follows. G-protein coupled receptor for 5-hydroxytryptamine (serotonin). Also functions as a receptor for various drugs and psychoactive substances, including ergot alkaloid derivatives, 1-2,5,-dimethoxy-4-iodophenyl-2-aminopropane (DOI) and lysergic acid diethylamide (LSD). Ligand binding causes a conformation change that triggers signaling via guanine nucleotide-binding proteins (G proteins) and modulates the activity of downstream effectors. HTR2C is coupled to G(q)/G(11) G alpha proteins and activates phospholipase C-beta, releasing diacylglycerol (DAG) and inositol 1,4,5-trisphosphate (IP3) second messengers that modulate the activity of phosphatidylinositol 3-kinase and promote the release of Ca(2+) ions from intracellular stores, respectively. Beta-arrestin family members inhibit signaling via G proteins and mediate activation of alternative signaling pathways. Regulates neuronal activity via the activation of short transient receptor potential calcium channels in the brain, and thereby modulates the activation of pro-opiomelanocortin neurons and the release of CRH that then regulates the release of corticosterone. Plays a role in the regulation of appetite and eating behavior, responses to anxiogenic stimuli and stress. Plays a role in insulin sensitivity and glucose homeostasis. This chain is 5-hydroxytryptamine receptor 2C, found in Canis lupus familiaris (Dog).